A 125-amino-acid polypeptide reads, in one-letter code: Prefoldin subunit beta (125 aa).

Belongs to the prefoldin subunit beta family. As to quaternary structure, heterohexamer of two alpha and four beta subunits.

The protein localises to the cytoplasm. In terms of biological role, molecular chaperone capable of stabilizing a range of proteins. Seems to fulfill an ATP-independent, HSP70-like function in archaeal de novo protein folding. This Sulfolobus acidocaldarius (strain ATCC 33909 / DSM 639 / JCM 8929 / NBRC 15157 / NCIMB 11770) protein is Prefoldin subunit beta.